A 102-amino-acid chain; its full sequence is Large ribosomal subunit protein uL24 (102 aa).

This sequence belongs to the universal ribosomal protein uL24 family. In terms of assembly, part of the 50S ribosomal subunit.

Its function is as follows. One of two assembly initiator proteins, it binds directly to the 5'-end of the 23S rRNA, where it nucleates assembly of the 50S subunit. One of the proteins that surrounds the polypeptide exit tunnel on the outside of the subunit. The sequence is that of Large ribosomal subunit protein uL24 from Finegoldia magna (strain ATCC 29328 / DSM 20472 / WAL 2508) (Peptostreptococcus magnus).